Consider the following 959-residue polypeptide: E3 ubiquitin-protein ligase NEDD4-like (959 aa).

In terms of domain architecture, C2 spans 10–130 (PWHGVCVPVC…TEDPTMERPY (121 aa)). Disordered regions lie at residues 183-206 (SNDS…WEEK), 248-275 (AAHR…DVPE), and 289-316 (DSLG…EELS). In terms of domain architecture, WW 1 spans 197–230 (PPLPPGWEEKVDNLGRTYYVNHNNRTTQWHRPSL). Position 316 is a phosphoserine (S316). At T322 the chain carries Phosphothreonine. S346 is modified (phosphoserine; by WNK1 and WNK4). Positions 369 to 402 (PGLPSGWEERKDAKGRTYYVNHNNRTTTWTRPIM) constitute a WW 2 domain. The tract at residues 408 to 478 (GASGSATNSN…YNSPKPQHKV (71 aa)) is disordered. S430 carries the post-translational modification Phosphoserine. S432 carries the phosphoserine; by SGK1 modification. Residue S433 is modified to Phosphoserine; by WNK1 and WNK4. A compositionally biased stretch (basic and acidic residues) spans 444–455 (GAKDSPVRRAVK). Residue S448 is modified to Phosphoserine; by SGK1. Phosphoserine occurs at positions 459, 463, 467, and 471. WW domains are found at residues 481–514 (SFLP…DPRL) and 532–565 (GPLP…DPRL). An HECT domain is found at 624–958 (RPDVLKARLW…VENAQGFEGV (335 aa)). The active-site Glycyl thioester intermediate is C926.

Interacts with UBE2E3. Interacts with NDFIP1; this interaction activates the E3 ubiquitin-protein ligase. Interacts with NDFIP2; this interaction activates the E3 ubiquitin-protein ligase. Interacts (via WW domains) with SCN1A. Interacts (via WW domains) with SCN2A. Interacts (via WW domains) with SCN3A. Interacts (via WW domains) with SCN5A. Interacts (via WW domains) with SCN8A. Interacts (via WW domains) with SCN9A. Interacts (via WW domains) with SCN10A. Interacts (via WW domains) with CLCN5. Interacts with SMAD2. Interacts with SMAD3. Interacts with SMAD6. Interacts with SMAD7. The phosphorylated form interacts with 14-3-3 proteins. Interacts with TNK2. Interacts with WNK1. Interacts with SGK1. Interacts (via C2 domain) with NPC2. Interacts with ARRDC4. Interacts with KCNQ1; promotes internalization of KCNQ1. Interacts (via domains WW1, 3 and 4) with USP36; the interaction inhibits ubiquitination of, at least, NTRK1, KCNQ2 and KCNQ3 by NEDD4L. Interacts with PRRG4 (via cytoplasmic domain). Interacts with LDLRAD3; the interaction is direct. Interacts with TTYH2 and TTYH3. Post-translationally, phosphorylated; which impairs interaction with SCNN. Interaction with YWHAH inhibits dephosphorylation. In terms of processing, auto-ubiquitinated.

The protein localises to the cytoplasm. It localises to the golgi apparatus. It is found in the endosome. Its subcellular location is the multivesicular body. The enzyme catalyses S-ubiquitinyl-[E2 ubiquitin-conjugating enzyme]-L-cysteine + [acceptor protein]-L-lysine = [E2 ubiquitin-conjugating enzyme]-L-cysteine + N(6)-ubiquitinyl-[acceptor protein]-L-lysine.. It participates in protein modification; protein ubiquitination. With respect to regulation, activated by NDFIP1- and NDFIP2-binding. Its function is as follows. E3 ubiquitin-protein ligase which accepts ubiquitin from an E2 ubiquitin-conjugating enzyme in the form of a thioester and then directly transfers the ubiquitin to targeted substrates. Inhibits TGF-beta signaling by triggering SMAD2 and TGFBR1 ubiquitination and proteasome-dependent degradation. Promotes ubiquitination and internalization of various plasma membrane channels such as ENaC, Nav1.2, Nav1.3, Nav1.5, Nav1.7, Nav1.8, Kv1.3, KCNH2, EAAT1 or CLC5. Promotes ubiquitination and degradation of SGK1 and TNK2. Ubiquitinates BRAT1 and this ubiquitination is enhanced in the presence of NDFIP1. Plays a role in dendrite formation by melanocytes. Involved in the regulation of TOR signaling. Ubiquitinates TTYH2 and TTYH3 and regulates protein levels of TTYH2. This is E3 ubiquitin-protein ligase NEDD4-like (NEDD4L) from Pongo abelii (Sumatran orangutan).